The primary structure comprises 309 residues: Flavonol sulfotransferase-like (309 aa).

3'-phosphoadenylyl sulfate is bound at residue 59–64 (KTGTTW). The Proton acceptor role is filled by His-119. 3'-phosphoadenylyl sulfate contacts are provided by residues Arg-141, Ser-149, Tyr-207, and 274 to 276 (RKG).

Belongs to the sulfotransferase 1 family.

The protein resides in the cytoplasm. This chain is Flavonol sulfotransferase-like, found in Flaveria bidentis (Coastal plain yellowtops).